Consider the following 379-residue polypeptide: UDP-4-amino-4-deoxy-L-arabinose--oxoglutarate aminotransferase (379 aa).

Lys-182 bears the N6-(pyridoxal phosphate)lysine mark.

Belongs to the DegT/DnrJ/EryC1 family. ArnB subfamily. In terms of assembly, homodimer. Requires pyridoxal 5'-phosphate as cofactor.

It carries out the reaction UDP-4-amino-4-deoxy-beta-L-arabinose + 2-oxoglutarate = UDP-beta-L-threo-pentopyranos-4-ulose + L-glutamate. Its pathway is nucleotide-sugar biosynthesis; UDP-4-deoxy-4-formamido-beta-L-arabinose biosynthesis; UDP-4-deoxy-4-formamido-beta-L-arabinose from UDP-alpha-D-glucuronate: step 2/3. It participates in bacterial outer membrane biogenesis; lipopolysaccharide biosynthesis. Catalyzes the conversion of UDP-4-keto-arabinose (UDP-Ara4O) to UDP-4-amino-4-deoxy-L-arabinose (UDP-L-Ara4N). The modified arabinose is attached to lipid A and is required for resistance to polymyxin and cationic antimicrobial peptides. This is UDP-4-amino-4-deoxy-L-arabinose--oxoglutarate aminotransferase from Salmonella schwarzengrund (strain CVM19633).